A 404-amino-acid polypeptide reads, in one-letter code: Rhomboid-related protein 3 (404 aa).

2 consecutive EF-hand domains span residues 34 to 69 (APEDHWKVLFEKFDPGSTGYISTGKFRSLLESHSSK) and 70 to 105 (LDPHKKEVLLALADSHADGQICYQDFVNLMSNKRSN). A run of 7 helical transmembrane segments spans residues 164–184 (WFMITITLLEVALFLYNGVLL), 227–247 (LGLNVALQLLVGVPLEMVHGA), 250–270 (IGLVYVAGVVAGSLAVSVADM), 274–294 (VVGSSGGVYALVSAHLANIVM), 305–324 (LLRMAVALICMSMEFGRAVW), 338–358 (PSFVAHLGGVAVGITLGVVVL), and 371–391 (WWIFVTMYTIFVLFAVFWNIF). Serine 278 serves as the catalytic Nucleophile. Histidine 343 is an active-site residue.

This sequence belongs to the peptidase S54 family.

It localises to the membrane. The catalysed reaction is Cleaves type-1 transmembrane domains using a catalytic dyad composed of serine and histidine that are contributed by different transmembrane domains.. Its function is as follows. May be involved in regulated intramembrane proteolysis and the subsequent release of functional polypeptides from their membrane anchors. The polypeptide is Rhomboid-related protein 3 (Rhbdl3) (Mus musculus (Mouse)).